The primary structure comprises 171 residues: PRA1-like protein (171 aa).

3 helical membrane passes run 67-87, 119-139, and 140-160; these read AIIAMLVIYALIRNPLLLIVI, VILACVLIPLGLFASPIETII, and WLVGASCVCVFGHAAFFEPPV.

This sequence belongs to the PRA1 family.

The protein localises to the membrane. The polypeptide is PRA1-like protein (Schizosaccharomyces pombe (strain 972 / ATCC 24843) (Fission yeast)).